We begin with the raw amino-acid sequence, 176 residues long: Ribosome maturation factor RimM (176 aa).

Residues 97–176 (EDEFYWRDLI…QILVDWDPDF (80 aa)) form the PRC barrel domain.

Belongs to the RimM family. As to quaternary structure, binds ribosomal protein uS19.

The protein resides in the cytoplasm. In terms of biological role, an accessory protein needed during the final step in the assembly of 30S ribosomal subunit, possibly for assembly of the head region. Essential for efficient processing of 16S rRNA. May be needed both before and after RbfA during the maturation of 16S rRNA. It has affinity for free ribosomal 30S subunits but not for 70S ribosomes. The sequence is that of Ribosome maturation factor RimM from Shewanella putrefaciens (strain CN-32 / ATCC BAA-453).